A 154-amino-acid polypeptide reads, in one-letter code: Protein X (154 aa).

The interval 68 to 117 is mitochondrial targeting sequence; it reads PCALRFTSARCMETTVNAHQILPKVLYKRTLGLPAMSTTDLEAYFKDCVF.

It belongs to the orthohepadnavirus protein X family. In terms of assembly, may form homodimer. May interact with host CEBPA, CFLAR, CREB1, DDB1, E4F1, HBXIP, HSPD1/HSP60, NFKBIA, POLR2E and SMAD4. Interacts with host SMC5-SMC6 complex and induces its degradation. Interacts with host TRPC4AP; leading to prevent ubiquitination of TRPC4AP. Interacts with host PLSCR1; this interaction promotes ubiquitination and degradation of HBx and impairs HBx-mediated cell proliferation. A fraction may be phosphorylated in insect cells and HepG2 cells, a human hepatoblastoma cell line. Phosphorylated in vitro by host protein kinase C or mitogen-activated protein kinase. N-acetylated in insect cells.

The protein localises to the host cytoplasm. It is found in the host nucleus. It localises to the host mitochondrion. Multifunctional protein that plays a role in silencing host antiviral defenses and promoting viral transcription. Does not seem to be essential for HBV infection. May be directly involved in development of cirrhosis and liver cancer (hepatocellular carcinoma). Most of cytosolic activities involve modulation of cytosolic calcium. The effect on apoptosis is controversial depending on the cell types in which the studies have been conducted. May induce apoptosis by localizing in mitochondria and causing loss of mitochondrial membrane potential. May also modulate apoptosis by binding host CFLAR, a key regulator of the death-inducing signaling complex (DISC). Promotes viral transcription by using the host E3 ubiquitin ligase DDB1 to target the SMC5-SMC6 complex to proteasomal degradation. This host complex would otherwise bind to viral episomal DNA, and prevents its transcription. Moderately stimulates transcription of many different viral and cellular transcription elements. Promoters and enhancers stimulated by HBx contain DNA binding sites for NF-kappa-B, AP-1, AP-2, c-EBP, ATF/CREB, or the calcium-activated factor NF-AT. The protein is Protein X of Homo sapiens (Human).